A 247-amino-acid chain; its full sequence is MPITVNKLRHDTHHFFYKKIGAIFFISIFATFMNILIDMFIKPDMHIVSIMENNKFINASSLLEFIQNMNLNEKHELLKYSILKIMESLISKTTLLGSIIILISFVSEPKKKSIVSSIRTFFLFFPSLFILNFLTTFIIQIGFMLLIIPGILLSIILSLSPIILFFKKNRLLDSIRLSMYISWKYIKIIGPGVLFWMCGKFILTMLLAHFSLINKNVLFLISNISMNILFSILIIYLFRFYMIFLRS.

6 helical membrane passes run 20-40 (IGAI…IDMF), 85-105 (IMES…LISF), 114-134 (IVSS…LNFL), 137-157 (FIIQ…SIIL), 188-208 (IIGP…MLLA), and 218-238 (LFLI…IYLF).

The protein belongs to the UPF0259 family.

The protein resides in the cell membrane. This is UPF0259 membrane protein BUAPTUC7_273 from Buchnera aphidicola subsp. Acyrthosiphon pisum (strain Tuc7).